Reading from the N-terminus, the 195-residue chain is dCTP deaminase (195 aa).

Residues 110 to 115 (RSSLAR), Asp-128, 136 to 138 (VLE), Tyr-171, Lys-178, and Gln-182 each bind dCTP. Glu-138 serves as the catalytic Proton donor/acceptor. The span at 169 to 179 (RPYSSRKDAKY) shows a compositional bias: basic and acidic residues. A disordered region spans residues 169-195 (RPYSSRKDAKYKNQQSAVASRIDEDKE).

This sequence belongs to the dCTP deaminase family. As to quaternary structure, homotrimer.

It catalyses the reaction dCTP + H2O + H(+) = dUTP + NH4(+). It participates in pyrimidine metabolism; dUMP biosynthesis; dUMP from dCTP (dUTP route): step 1/2. Catalyzes the deamination of dCTP to dUTP. In Haemophilus influenzae (strain 86-028NP), this protein is dCTP deaminase.